The chain runs to 424 residues: Circumsporozoite protein (424 aa).

An N-terminal signal peptide occupies residues 1–18 (MMRKLAILSVSSFLFVEA). The interval 69–339 (SRSLGENDDG…VKNNNNEEPS (271 aa)) is disordered. Positions 85–106 (NNREGKDEDKRDGNNEDNETLR) are enriched in basic and acidic residues. Residues 104 to 111 (TLRKPKHK) are required for the binding to heparan sulfate proteoglycans (HSPGs) on the surface of host hepatocytes. The segment at 112–116 (KLKQP) is region I; contains the proteolytic cleavage site. A compositionally biased stretch (low complexity) spans 120–300 (NPDPNANPNV…PNANPNANPN (181 aa)). 44 tandem repeats follow at residues 123–126 (PNAN), 127–130 (PNVD), 131–134 (PNAN), 135–138 (PNVD), 139–142 (PNAN), 143–146 (PNVD), 147–150 (PNAN), 151–154 (PNAN), 155–158 (PNAN), 159–162 (PNAN), 163–166 (PNAN), 167–170 (PNAN), 171–174 (PNAN), 175–178 (PNAN), 179–182 (PNAN), 183–186 (PNAN), 187–190 (PNAN), 191–194 (PNAN), 195–198 (PNAN), 199–202 (PNAN), 203–206 (PNAN), 207–210 (PNAN), 211–214 (PNAN), 215–218 (PNAN), 219–222 (PNAN), 223–226 (PNAN), 227–230 (PNAN), 231–234 (PNAN), 235–238 (PNAN), 239–242 (PNAN), 243–246 (PNAN), 247–250 (PNAN), 251–254 (PNAN), 255–258 (PNAN), 259–262 (PNAN), 263–266 (PNAN), 267–270 (PNAN), 271–274 (PNAN), 275–278 (PNAN), 279–282 (PNAN), 283–286 (PNAN), 287–290 (PNAN), 291–294 (PNAN), and 295–298 (PNAN). The segment at 123–298 (PNANPNVDPN…ANPNANPNAN (176 aa)) is 44 X 4 AA tandem repeats of P-N-[AV]-[ND]. The segment covering 301-316 (KNNQGNGQGHNMPNDP) has biased composition (polar residues). Residues 322-336 (ENANANNAVKNNNNE) are compositionally biased toward low complexity. Residues 349 to 402 (KIQNSLSTEWSPCSVTCGNGIQVRIKPGSANKPKDELDYENDIEKKICKMEKCS) form the TSP type-1 domain. Disulfide bonds link Cys-361–Cys-396 and Cys-365–Cys-401. A glycan (O-linked (Fuc) threonine) is linked at Thr-364. Cys-401 carries the GPI-anchor amidated cysteine lipid modification. Residues 402 to 424 (SSVFNVVNSSIGLIMVLSFLFLN) constitute a propeptide, removed in mature form.

The protein belongs to the plasmodium circumsporozoite protein family. In terms of processing, during host cell invasion, proteolytically cleaved at the cell membrane in the region I by a papain-like cysteine protease of parasite origin. Cleavage is triggered by the sporozoite contact with highly sulfated heparan sulfate proteoglycans (HSPGs) present on the host hepatocyte cell surface. Cleavage exposes the TSP type-1 (TSR) domain and is required for productive invasion of host hepatocytes but not for adhesion to the host cell membrane. Cleavage is dispensable for sporozoite development in the oocyst, motility and for traversal of host and vector cells. O-glycosylated; maybe by POFUT2.

Its subcellular location is the cell membrane. It is found in the cytoplasm. Its function is as follows. Essential sporozoite protein. In the mosquito vector, required for sporozoite development in the oocyst, migration through the vector hemolymph and entry into the vector salivary glands. In the vertebrate host, required for sporozoite migration through the host dermis and infection of host hepatocytes. Binds to highly sulfated heparan sulfate proteoglycans (HSPGs) on the surface of host hepatocytes. Functionally, in the vertebrate host, binds to highly sulfated heparan sulfate proteoglycans (HSPGs) on the surface of host hepatocytes and is required for sporozoite invasion of the host hepatocytes. The sequence is that of Circumsporozoite protein from Plasmodium falciparum (isolate t4 / Thailand).